The chain runs to 569 residues: Potassium-transporting ATPase potassium-binding subunit (569 aa).

The next 10 helical transmembrane spans lie at 5-25 (GWAE…PLGV), 65-85 (GYAG…YAVL), 135-155 (LVLT…AAAL), 179-199 (LYVL…LGLP), 254-274 (LTNL…FFAF), 286-306 (ALVI…YWTE), 383-403 (GIAV…LMVG), 422-442 (LLTV…AAVL), 489-509 (MGVA…AMAG), and 528-548 (GGLF…LQFF).

The protein belongs to the KdpA family. As to quaternary structure, the system is composed of three essential subunits: KdpA, KdpB and KdpC.

The protein resides in the cell inner membrane. In terms of biological role, part of the high-affinity ATP-driven potassium transport (or Kdp) system, which catalyzes the hydrolysis of ATP coupled with the electrogenic transport of potassium into the cytoplasm. This subunit binds the periplasmic potassium ions and delivers the ions to the membrane domain of KdpB through an intramembrane tunnel. This Caulobacter sp. (strain K31) protein is Potassium-transporting ATPase potassium-binding subunit.